A 783-amino-acid polypeptide reads, in one-letter code: Mitochondrial intermediate peptidase (783 aa).

Residues 1–33 constitute a mitochondrion transit peptide; sequence MKAGIPLSRCTQRIPLLVARQVSRNITTTTTKF. Zn(2+) is bound at residue His-565. The active site involves Glu-566. Residues His-569 and His-572 each contribute to the Zn(2+) site.

This sequence belongs to the peptidase M3 family. It depends on Zn(2+) as a cofactor.

It is found in the mitochondrion matrix. The enzyme catalyses Release of an N-terminal octapeptide as second stage of processing of some proteins imported into the mitochondrion.. In terms of biological role, cleaves proteins, imported into the mitochondrion, to their mature size. While most mitochondrial precursor proteins are processed to the mature form in one step by mitochondrial processing peptidase (MPP), the sequential cleavage by MIP of an octapeptide after initial processing by MPP is a required step for a subgroup of nuclear-encoded precursor proteins destined for the matrix or the inner membrane. The sequence is that of Mitochondrial intermediate peptidase (OCT1) from Candida albicans (strain SC5314 / ATCC MYA-2876) (Yeast).